The following is a 95-amino-acid chain: Large ribosomal subunit protein bL25 (95 aa).

Belongs to the bacterial ribosomal protein bL25 family. In terms of assembly, part of the 50S ribosomal subunit; part of the 5S rRNA/L5/L18/L25 subcomplex. Contacts the 5S rRNA. Binds to the 5S rRNA independently of L5 and L18.

This is one of the proteins that binds to the 5S RNA in the ribosome where it forms part of the central protuberance. This Shewanella loihica (strain ATCC BAA-1088 / PV-4) protein is Large ribosomal subunit protein bL25.